Reading from the N-terminus, the 481-residue chain is Sucrose phosphorylase (481 aa).

Sucrose-binding positions include Asp-49, His-87, 191–193 (RLD), Glu-234, 291–292 (HD), 335–338 (DIYQ), and Arg-392. The Nucleophile role is filled by Asp-193. Glu-234 acts as the Proton donor in catalysis.

It belongs to the glycosyl hydrolase 13 family. Sucrose phosphorylase subfamily.

Its subcellular location is the cytoplasm. The enzyme catalyses sucrose + phosphate = D-fructose + alpha-D-glucose 1-phosphate. Intracellular catabolism of sucrose. Being intracellular, probably not involved in synthesis of extracellular polysaccharides. The polypeptide is Sucrose phosphorylase (Streptococcus mutans serotype c (strain ATCC 700610 / UA159)).